The following is an 803-amino-acid chain: Phenylalanine--tRNA ligase beta subunit (803 aa).

A tRNA-binding domain is found at 40-153 (ASLDRRIVVG…SSWEIGKPFA (114 aa)). The B5 domain occupies 400–476 (ADLQLLALRP…RLYGYNAIES (77 aa)). Positions 454, 460, 463, and 464 each coordinate Mg(2+). The FDX-ACB domain maps to 709–801 (SRFPVVERDI…AESKLGAVIR (93 aa)).

Belongs to the phenylalanyl-tRNA synthetase beta subunit family. Type 1 subfamily. As to quaternary structure, tetramer of two alpha and two beta subunits. The cofactor is Mg(2+).

The protein resides in the cytoplasm. It catalyses the reaction tRNA(Phe) + L-phenylalanine + ATP = L-phenylalanyl-tRNA(Phe) + AMP + diphosphate + H(+). The chain is Phenylalanine--tRNA ligase beta subunit from Chlorobium chlorochromatii (strain CaD3).